Here is a 157-residue protein sequence, read N- to C-terminus: Small ribosomal subunit protein uS7 (157 aa).

It belongs to the universal ribosomal protein uS7 family. As to quaternary structure, part of the 30S ribosomal subunit. Contacts proteins S9 and S11.

In terms of biological role, one of the primary rRNA binding proteins, it binds directly to 16S rRNA where it nucleates assembly of the head domain of the 30S subunit. Is located at the subunit interface close to the decoding center, probably blocks exit of the E-site tRNA. This Borreliella afzelii (strain PKo) (Borrelia afzelii) protein is Small ribosomal subunit protein uS7.